The primary structure comprises 387 residues: Galactokinase (387 aa).

Substrate is bound at residue 36–39 (EHTD). ATP is bound by residues Ser70 and 125 to 131 (GAGLSSS). 2 residues coordinate Mg(2+): Ser131 and Glu163. Asp175 serves as the catalytic Proton acceptor. Tyr227 lines the substrate pocket.

The protein belongs to the GHMP kinase family. GalK subfamily.

The protein localises to the cytoplasm. The catalysed reaction is alpha-D-galactose + ATP = alpha-D-galactose 1-phosphate + ADP + H(+). The protein operates within carbohydrate metabolism; galactose metabolism. Functionally, catalyzes the transfer of the gamma-phosphate of ATP to D-galactose to form alpha-D-galactose-1-phosphate (Gal-1-P). This chain is Galactokinase, found in Streptomyces coelicolor (strain ATCC BAA-471 / A3(2) / M145).